We begin with the raw amino-acid sequence, 702 residues long: BRCA1-associated RING domain protein 1 (702 aa).

The RING-type zinc-finger motif lies at 18–67; the sequence is CVKCKKPRGDLQYLGSSCKHAYCWECIATFQQKPSGKRSSVARHMCPSCA. Disordered regions lie at residues 153 to 205 and 281 to 346; these read DENR…TSVK and ASMS…YGTR. The segment covering 174–188 has biased composition (polar residues); that stretch reads ASPTRNSTKRPSTVS. Positions 312–321 are enriched in basic and acidic residues; it reads IKSDKIERRS. ANK repeat units lie at residues 347–376, 379–408, and 413–442; these read RGEA…CVNE, DGKT…VINA, and TLET…SIKI. The BRCT domain occupies 601-702; that stretch reads MQPKLFAGCK…LGCSITTPPH (102 aa).

In terms of assembly, heterodimer (via RING-type zinc finger) with brc-1 to form the core CeBCD complex. Brc-1-brd-1 heterodimer-containing CeBCD complexes bound to chromatin are activated as an E3-ubiquitin ligase in response to DNA damage. The heterodimer interacts with the recombinase rad-51 following ionizing irradiation; the interaction is direct. The heterodimer interacts the E2-ubiquitin-conjugating enzyme let-70 following ionizing irradiation. The heterodimer interacts with the pro-crossover proteins msh-5 and syp-3. Interacts with smt-3, tac-1 and ubc-9. Autoubiquitinated. Post-translationally, phosphorylation of CeBCD complexes is required for E3 ubiquitin-protein ligase activity.

The protein localises to the cytoplasm. It localises to the nucleus. Its subcellular location is the chromosome. It catalyses the reaction S-ubiquitinyl-[E2 ubiquitin-conjugating enzyme]-L-cysteine + [acceptor protein]-L-lysine = [E2 ubiquitin-conjugating enzyme]-L-cysteine + N(6)-ubiquitinyl-[acceptor protein]-L-lysine.. The protein operates within protein modification; protein ubiquitination. With respect to regulation, E3 ubiquitin-protein ligase activity of CeBCD complexes occurs at DNA damage sites. Following DNA damage, E3 ubiquitin-protein ligase activity is reduced by caffeine treatment (inhibitor of ATM and ATK kinase activity). In terms of biological role, constituent of the CeBCD complex that possesses E3 ubiquitin-protein ligase activity. When bound to chromatin, the brc-1-brd-1 heterodimer within the CeBCD complex is inactive during normal conditions, but in response to DNA damage, the brc-1-brd-1 heterodimer associates with other proteins such as the recombinase rad-51 or the E2-ubiquitin-conjugating enzyme let-70, which activate the CeBCD complex as an E3-ubiquitin ligase. Moreover, association between the brc-1-brd-1 heterodimer and rad-51 and let-70, probably requires DNA checkpoint proteins such as atl-1 and mre-11 in order to induce ubiquitination at DNA damage sites. To this end, the brc-1-brd-1 heterodimer coordinates a diverse range of cellular pathways such as DNA damage repair, ubiquitination and transcriptional regulation to maintain genomic stability. Plays a role in triggering cellular responses at damage sites in response to DNA damage that may be induced by ionizing radiation for example. In particular, protects against chromosome non-disjunction and nuclear fragmentation during meiotic double-strand break repair to ensure sister chromatid recombination and aid chromosome stability. The sequence is that of BRCA1-associated RING domain protein 1 from Caenorhabditis elegans.